We begin with the raw amino-acid sequence, 122 residues long: Proximal tubules-expressed gene protein (122 aa).

Residues 33-53 (WLTGLIAMTVFLFLVLVVYVA) form a helical membrane-spanning segment.

Belongs to the PDZK1-interacting protein 1/SMIM24 family. In terms of tissue distribution, expressed in prospective pronephric mesoderm at the late gastrula stage. After neurulation, expressed in the intermediate mesoderm, eye placode and blood islands. Expression becomes restricted to the pronephric proximal tubule during embryogenesis, but is absent from the connecting tubules.

It is found in the membrane. Its function is as follows. Essential for pronephric tubule development, acting upstream of pax8 and lhx1/lim1 and downstream of retinoic acid signaling to induce pronephric mesoderm to form pronephric tubule-specific cells. The sequence is that of Proximal tubules-expressed gene protein (pteg) from Xenopus laevis (African clawed frog).